The following is a 480-amino-acid chain: GPI-anchored wall transfer protein 1 (480 aa).

The next 11 helical transmembrane spans lie at I20–L40, V47–Y67, D70–G90, P114–V134, L153–L173, W186–V208, F228–Y248, V252–L272, I291–V311, W343–F363, and L381–V401. A glycan (N-linked (GlcNAc...) asparagine) is linked at N406. The next 2 helical transmembrane spans lie at L426–L446 and L450–I470.

This sequence belongs to the PIGW family.

Its subcellular location is the endoplasmic reticulum membrane. It functions in the pathway glycolipid biosynthesis; glycosylphosphatidylinositol-anchor biosynthesis. Probable acetyltransferase, which acetylates the inositol ring of phosphatidylinositol during biosynthesis of GPI-anchor. The polypeptide is GPI-anchored wall transfer protein 1 (GWT1) (Eremothecium gossypii (strain ATCC 10895 / CBS 109.51 / FGSC 9923 / NRRL Y-1056) (Yeast)).